A 449-amino-acid chain; its full sequence is Transport protein ComB (449 aa).

Residues 1 to 20 lie on the Cytoplasmic side of the membrane; it reads MKPEFLESAEFYNRRYHNFS. A helical membrane pass occupies residues 21–41; the sequence is SSVIVPMALLLVFLLGFATVA. Topologically, residues 42 to 449 are extracellular; the sequence is EKEMSLSTRA…YYLDQFLNKE (408 aa).

This sequence belongs to the membrane fusion protein (MFP) (TC 8.A.1) family.

The protein localises to the cell membrane. Its function is as follows. Required for induction of competence. The polypeptide is Transport protein ComB (comB) (Streptococcus pneumoniae (strain ATCC BAA-255 / R6)).